Consider the following 517-residue polypeptide: Glucans biosynthesis protein G (517 aa).

Positions 1-28 are cleaved as a signal peptide; that stretch reads MKHKLQMMKMRWLSAAVMLTLYTSSSWA.

This sequence belongs to the OpgD/OpgG family.

The protein resides in the periplasm. The protein operates within glycan metabolism; osmoregulated periplasmic glucan (OPG) biosynthesis. Its function is as follows. Involved in the biosynthesis of osmoregulated periplasmic glucans (OPGs). In Escherichia coli O1:K1 / APEC, this protein is Glucans biosynthesis protein G.